Reading from the N-terminus, the 135-residue chain is Sex-regulated protein janus-A (135 aa).

Substrate is bound at residue Lys37. The Proton acceptor role is filled by His63. Position 104–106 (104–106 (SQG)) interacts with substrate.

It belongs to the janus family.

Its function is as follows. JanA and janB regulate somatic sex differentiation. The sequence is that of Sex-regulated protein janus-A (janA) from Drosophila mauritiana (Fruit fly).